The sequence spans 1310 residues: PAN2-PAN3 deadenylation complex catalytic subunit pan2 (1310 aa).

WD repeat units follow at residues 22 to 61, 67 to 105, 106 to 144, and 145 to 184; these read YHAGPASTIAFDNQDELLWIGTQKGFAGSFIGRELKRFTA, ETDGPLRQFLFVDKGVIFLGSRSVYMAARSGVPIWSIRH, ESMQDLRAMSFTSKGTSEILVAGWQNKMLVIDVNKGEVV, and KELPTQDQYSFLKMSRYICAATNKGTVNILDPITFTIKKQ. The interval 318-463 is linker; that stretch reads QFTEIGIPPR…NNDHWSLRPE (146 aa). A USP domain is found at 463–850; the sequence is EAPPEYRICE…MPVVVMFQVK (388 aa). Zn(2+) contacts are provided by H525, C530, C535, C538, C645, C648, C700, and C703. The 174-residue stretch at 897–1070 folds into the Exonuclease domain; the sequence is IAIDTEFIRL…EDAQTALKLY (174 aa). A divalent metal cation is bound by residues D900, E902, D1009, and D1062. Positions 1121–1169 are disordered; sequence TPPVPAPGTTEGSFEISNSSTATTGGSALSATGGMGSASASSSMPSTPV. Positions 1139-1168 are enriched in low complexity; sequence SSTATTGGSALSATGGMGSASASSSMPSTP.

This sequence belongs to the peptidase C19 family. PAN2 subfamily. As to quaternary structure, forms a heterotrimer with an asymmetric homodimer of the regulatory subunit par-2/pan3 to form the poly(A)-nuclease (PAN) deadenylation complex. It depends on a divalent metal cation as a cofactor.

It is found in the cytoplasm. The catalysed reaction is Exonucleolytic cleavage of poly(A) to 5'-AMP.. Its activity is regulated as follows. Positively regulated by the regulatory subunit par-2/pan3. In terms of biological role, catalytic subunit of the poly(A)-nuclease (PAN) deadenylation complex, one of two cytoplasmic mRNA deadenylases involved in mRNA turnover. PAN specifically shortens poly(A) tails of RNA and the activity is stimulated by poly(A)-binding protein pabp-1. PAN deadenylation is followed by rapid degradation of the shortened mRNA tails by the CCR4-NOT complex. Deadenylated mRNAs are then degraded by two alternative mechanisms, namely exosome-mediated 3'-5' exonucleolytic degradation, or deadenylation-dependent mRNA decaping and subsequent 5'-3' exonucleolytic degradation by rgb-30/xrn1. May also be involved in post-transcriptional maturation of mRNA poly(A) tails. The polypeptide is PAN2-PAN3 deadenylation complex catalytic subunit pan2 (par-1) (Neurospora crassa (strain ATCC 24698 / 74-OR23-1A / CBS 708.71 / DSM 1257 / FGSC 987)).